The primary structure comprises 240 residues: Probable alpha-aspartyl dipeptidase (240 aa).

Residues S125, D140, and H162 each act as charge relay system in the active site.

This sequence belongs to the peptidase S51 family.

The protein resides in the cytoplasm. It carries out the reaction Dipeptidase E catalyzes the hydrolysis of dipeptides Asp-|-Xaa. It does not act on peptides with N-terminal Glu, Asn or Gln, nor does it cleave isoaspartyl peptides.. In terms of biological role, hydrolyzes dipeptides containing N-terminal aspartate residues. The chain is Probable alpha-aspartyl dipeptidase from Drosophila melanogaster (Fruit fly).